The following is an 804-amino-acid chain: Endoplasmin (804 aa).

Positions 1–21 are cleaved as a signal peptide; sequence MRALWVLGLCCVLLTFGSVRA. The SRT pseudosubstrate motif motif lies at 42 to 44; sequence SRT. The N-linked (GlcNAc...) asparagine glycan is linked to N62. Phosphoserine is present on S64. N-linked (GlcNAc...) asparagine glycosylation occurs at N107. ATP contacts are provided by N107, D149, and N162. K168 is subject to N6-(2-hydroxyisobutyryl)lysine. S172 bears the Phosphoserine mark. ATP is bound at residue F199. N217 carries an N-linked (GlcNAc...) asparagine glycan. Residues 288–323 form a disordered region; sequence TVEEPAEEEEAAKEDKEESDDEAAVEEEEDEKKPKT. Over residues 289–317 the composition is skewed to acidic residues; it reads VEEPAEEEEAAKEDKEESDDEAAVEEEED. A phosphoserine mark is found at S306 and S403. Residue K404 is modified to N6-succinyllysine. Residue N445 is glycosylated (N-linked (GlcNAc...) asparagine). S447 carries the phosphoserine modification. Residue K479 is modified to N6-acetyllysine. 2 N-linked (GlcNAc...) asparagine glycosylation sites follow: N481 and N502. Residue K633 is modified to N6-succinyllysine. Residues 750–804 form a disordered region; the sequence is DPDAKVEEEPEEEPEETTEDTAEDTEQDEEEEMDAGTDEEEQETAEKSTAEKDEL. Residues 757 to 792 are compositionally biased toward acidic residues; that stretch reads EEPEEEPEETTEDTAEDTEQDEEEEMDAGTDEEEQE. The residue at position 786 (T786) is a Phosphothreonine. Residues 793–804 show a composition bias toward basic and acidic residues; the sequence is TAEKSTAEKDEL. The Prevents secretion from ER signature appears at 801-804; it reads KDEL.

Belongs to the heat shock protein 90 family. Homodimer; disulfide-linked. Component of an EIF2 complex at least composed of CELF1/CUGBP1, CALR, CALR3, EIF2S1, EIF2S2, HSP90B1 and HSPA5. Part of a large chaperone multiprotein complex comprising DNAJB11, HSP90B1, HSPA5, HYOU, PDIA2, PDIA4, PDIA6, PPIB, SDF2L1, UGGT1 and very small amounts of ERP29, but not, or at very low levels, CALR nor CANX. Interacts with AIMP1; regulates its retention in the endoplasmic reticulum. Hyperglycosylated form interacts with OS9; promoting its degradation by the endoplasmic reticulum associated degradation (ERAD). Interacts with CNPY3. This interaction is disrupted in the presence of ATP. Interacts with TLR4 and TLR9, but not with TLR3. Interacts with MZB1 in a calcium-dependent manner. Interacts with METTL23. Interacts with IL1B; the interaction facilitates cargo translocation into the ERGIC. Interacts with EIF2AK3. Phosphorylated by CK2. Post-translationally, N-glycosylated cotranslationally at Asn-217 by STT3A-containing OST-A complex: this glycosylation is constitutive. In response to various stress, 5 additional facultative sites (Asn-62, Asn-107, Asn-445, Asn-481 and Asn-502) can be glycosylated post-translationally by STT3B-containing OST-B complex, leading to a hyperglycosylated form that is degraded by the ER-associated degradation (ERAD) pathway. In normal conditions, the OST-A complex together with CCDC134 prevent glycosylation at facultative sites during protein folding, thereby preventing hyperglycosylation. Mechanistically, nascent HSP90B1 is tethered during translation to a specialized CCDC134-containing translocon that forms a microenvironment for its folding, in which STT3A associates with the SRT pseudosubstrate motif, and prevents access to facultative glycosylation sites until folding is completed, rendering its facultative sites inaccessible to the OST-B complex.

It localises to the endoplasmic reticulum lumen. The protein localises to the sarcoplasmic reticulum lumen. The protein resides in the melanosome. It catalyses the reaction ATP + H2O = ADP + phosphate + H(+). Its function is as follows. ATP-dependent chaperone involved in the processing of proteins in the endoplasmic reticulum, regulating their transport. Together with MESD, acts as a modulator of the Wnt pathway by promoting the folding of LRP6, a coreceptor of the canonical Wnt pathway. When associated with CNPY3, required for proper folding of Toll-like receptors. Promotes folding and trafficking of TLR4 to the cell surface. May participate in the unfolding of cytosolic leaderless cargos (lacking the secretion signal sequence) such as the interleukin 1/IL-1 to facilitate their translocation into the ERGIC (endoplasmic reticulum-Golgi intermediate compartment) and secretion; the translocation process is mediated by the cargo receptor TMED10. In Bos taurus (Bovine), this protein is Endoplasmin (HSP90B1).